Here is a 341-residue protein sequence, read N- to C-terminus: tRNA N6-adenosine threonylcarbamoyltransferase (341 aa).

2 residues coordinate Fe cation: histidine 111 and histidine 115. Substrate is bound by residues leucine 134–glycine 138, aspartate 167, glycine 180, and asparagine 276. Aspartate 304 provides a ligand contact to Fe cation.

Belongs to the KAE1 / TsaD family. Fe(2+) is required as a cofactor.

Its subcellular location is the cytoplasm. The enzyme catalyses L-threonylcarbamoyladenylate + adenosine(37) in tRNA = N(6)-L-threonylcarbamoyladenosine(37) in tRNA + AMP + H(+). In terms of biological role, required for the formation of a threonylcarbamoyl group on adenosine at position 37 (t(6)A37) in tRNAs that read codons beginning with adenine. Is involved in the transfer of the threonylcarbamoyl moiety of threonylcarbamoyl-AMP (TC-AMP) to the N6 group of A37, together with TsaE and TsaB. TsaD likely plays a direct catalytic role in this reaction. This Pseudomonas aeruginosa (strain UCBPP-PA14) protein is tRNA N6-adenosine threonylcarbamoyltransferase.